Consider the following 517-residue polypeptide: NAD(P)H-quinone oxidoreductase subunit 2 (517 aa).

14 consecutive transmembrane segments (helical) span residues 16-36 (ILPE…DLIF), 43-63 (WLPY…YLAW), 80-100 (LSIV…LMSI), 110-130 (LAEF…LCGA), 133-153 (LVMI…MTGY), 168-188 (LLIG…LYGL), 211-231 (LGLA…ISAV), 245-265 (PTPV…ALAI), 279-299 (WHFV…VVAL), 307-327 (MLAY…VAGT), 335-355 (VFYL…IILF), 379-399 (LALS…GFFG), 401-421 (IYLF…LGLV), and 467-487 (VGIV…NPLF).

Belongs to the complex I subunit 2 family. As to quaternary structure, NDH-1 can be composed of about 15 different subunits; different subcomplexes with different compositions have been identified which probably have different functions.

It is found in the cellular thylakoid membrane. It carries out the reaction a plastoquinone + NADH + (n+1) H(+)(in) = a plastoquinol + NAD(+) + n H(+)(out). The enzyme catalyses a plastoquinone + NADPH + (n+1) H(+)(in) = a plastoquinol + NADP(+) + n H(+)(out). Functionally, NDH-1 shuttles electrons from an unknown electron donor, via FMN and iron-sulfur (Fe-S) centers, to quinones in the respiratory and/or the photosynthetic chain. The immediate electron acceptor for the enzyme in this species is believed to be plastoquinone. Couples the redox reaction to proton translocation, and thus conserves the redox energy in a proton gradient. Cyanobacterial NDH-1 also plays a role in inorganic carbon-concentration. In Rippkaea orientalis (strain PCC 8801 / RF-1) (Cyanothece sp. (strain PCC 8801)), this protein is NAD(P)H-quinone oxidoreductase subunit 2.